The sequence spans 242 residues: Phosphoribosylaminoimidazole-succinocarboxamide synthase (242 aa).

It belongs to the SAICAR synthetase family.

The enzyme catalyses 5-amino-1-(5-phospho-D-ribosyl)imidazole-4-carboxylate + L-aspartate + ATP = (2S)-2-[5-amino-1-(5-phospho-beta-D-ribosyl)imidazole-4-carboxamido]succinate + ADP + phosphate + 2 H(+). The protein operates within purine metabolism; IMP biosynthesis via de novo pathway; 5-amino-1-(5-phospho-D-ribosyl)imidazole-4-carboxamide from 5-amino-1-(5-phospho-D-ribosyl)imidazole-4-carboxylate: step 1/2. The protein is Phosphoribosylaminoimidazole-succinocarboxamide synthase of Cyanothece sp. (strain PCC 7425 / ATCC 29141).